We begin with the raw amino-acid sequence, 254 residues long: Ribosomal RNA small subunit methyltransferase A (254 aa).

Asparagine 12, leucine 14, glycine 38, glutamate 59, aspartate 83, and asparagine 100 together coordinate S-adenosyl-L-methionine.

This sequence belongs to the class I-like SAM-binding methyltransferase superfamily. rRNA adenine N(6)-methyltransferase family. RsmA subfamily.

It is found in the cytoplasm. It catalyses the reaction adenosine(1518)/adenosine(1519) in 16S rRNA + 4 S-adenosyl-L-methionine = N(6)-dimethyladenosine(1518)/N(6)-dimethyladenosine(1519) in 16S rRNA + 4 S-adenosyl-L-homocysteine + 4 H(+). Functionally, specifically dimethylates two adjacent adenosines (A1518 and A1519) in the loop of a conserved hairpin near the 3'-end of 16S rRNA in the 30S particle. May play a critical role in biogenesis of 30S subunits. In Mycoplasma mobile (strain ATCC 43663 / 163K / NCTC 11711) (Mesomycoplasma mobile), this protein is Ribosomal RNA small subunit methyltransferase A.